Consider the following 579-residue polypeptide: Zinc finger protein 382 (579 aa).

A compositionally biased stretch (basic residues) spans 1–12; it reads MGRPGRKPRGRA. The segment at 1–37 is disordered; sequence MGRPGRKPRGRARPGLFPFPKEELRQGGSSPANLNAM. The segment at 12–135 is mediates interaction with TRIM28; that stretch reads ARPGLFPFPK…DKPPKSIVII (124 aa). A compositionally biased stretch (polar residues) spans 27-36; it reads GGSSPANLNA. 2 represses transcription regions span residues 40-81 and 105-240; these read GPVS…FISV and IFPS…PEQR. The 72-residue stretch at 42-113 folds into the KRAB domain; sequence VSFKDVTVDF…RIFPSQSYLE (72 aa). The C2H2-type 1; degenerate zinc finger occupies 241–263; sequence FEYNKCDSSFLMTGVEFPHGRAH. 9 consecutive C2H2-type zinc fingers follow at residues 325-347, 353-375, 381-403, 409-431, 437-459, 465-487, 493-515, 521-543, and 549-571; these read FQCP…ERIH, YICC…EKTH, YLCV…HKAH, YECT…QRTH, YQCT…QRTH, YICS…QRIH, YICS…YRIH, NGCP…QKIH, and YECQ…QKTH. The segment at 325–579 is required for transcriptional repression activity; probably mediates sequence-specific DNA-binding; it reads FQCPYCGNSF…THKTETMRFQ (255 aa).

Belongs to the krueppel C2H2-type zinc-finger protein family. Interacts with TRIM28; enhances the transcriptional repressor activity.

The protein resides in the nucleus. Its function is as follows. Functions as a sequence-specific transcriptional repressor. In Mus musculus (Mouse), this protein is Zinc finger protein 382 (Znf382).